The following is a 30-amino-acid chain: Cycloviolacin-O5 (30 aa).

A cross-link (cyclopeptide (Gly-Asn)) is located at residues 1–30 (GTPCGESCVWIPCISSAVGCSCKNKVCYKN). 3 disulfide bridges follow: Cys-4–Cys-20, Cys-8–Cys-22, and Cys-13–Cys-27.

Post-translationally, this is a cyclic peptide.

Its function is as follows. Probably participates in a plant defense mechanism. In Viola odorata (Sweet violet), this protein is Cycloviolacin-O5.